The sequence spans 193 residues: Holliday junction branch migration complex subunit RuvA (193 aa).

The interval 1–63 (MYAYLKGKIM…EDAQLLYGFK (63 aa)) is domain I. The segment at 64–141 (DEEEKAMFNA…TITDESELFK (78 aa)) is domain II. The flexible linker stretch occupies residues 141–142 (KE). Residues 143–193 (VNDTLLNEALLAFEALGYSKREITKIEKELKKKQFSTVDEYVKQGLQMFVS) form a domain III region.

The protein belongs to the RuvA family. Homotetramer. Forms an RuvA(8)-RuvB(12)-Holliday junction (HJ) complex. HJ DNA is sandwiched between 2 RuvA tetramers; dsDNA enters through RuvA and exits via RuvB. An RuvB hexamer assembles on each DNA strand where it exits the tetramer. Each RuvB hexamer is contacted by two RuvA subunits (via domain III) on 2 adjacent RuvB subunits; this complex drives branch migration. In the full resolvosome a probable DNA-RuvA(4)-RuvB(12)-RuvC(2) complex forms which resolves the HJ.

The protein resides in the cytoplasm. Functionally, the RuvA-RuvB-RuvC complex processes Holliday junction (HJ) DNA during genetic recombination and DNA repair, while the RuvA-RuvB complex plays an important role in the rescue of blocked DNA replication forks via replication fork reversal (RFR). RuvA specifically binds to HJ cruciform DNA, conferring on it an open structure. The RuvB hexamer acts as an ATP-dependent pump, pulling dsDNA into and through the RuvAB complex. HJ branch migration allows RuvC to scan DNA until it finds its consensus sequence, where it cleaves and resolves the cruciform DNA. The protein is Holliday junction branch migration complex subunit RuvA of Macrococcus caseolyticus (strain JCSC5402) (Macrococcoides caseolyticum).